Here is a 223-residue protein sequence, read N- to C-terminus: Ubiquitin carboxyl-terminal hydrolase isozyme L1 (223 aa).

Methionine 1 carries the post-translational modification N-acetylmethionine. The region spanning 2-221 (QLKPMEINPE…VRFSAVALCK (220 aa)) is the UCH catalytic domain. Residues 5-10 (PMEINP) are interaction with ubiquitin. Cysteine 90 serves as the catalytic Nucleophile. Serine 125 carries the post-translational modification Phosphoserine. The Proton donor role is filled by histidine 161. Positions 211-216 (EVRFSA) are interaction with ubiquitin. Cysteine 220 carries the S-farnesyl cysteine lipid modification. The propeptide at 221–223 (KAA) is removed in mature form.

Belongs to the peptidase C12 family. Monomer. Homodimer. Interacts with COPS5 and SNCA. In terms of processing, O-glycosylated.

The protein localises to the cytoplasm. It localises to the endoplasmic reticulum membrane. It catalyses the reaction Thiol-dependent hydrolysis of ester, thioester, amide, peptide and isopeptide bonds formed by the C-terminal Gly of ubiquitin (a 76-residue protein attached to proteins as an intracellular targeting signal).. In terms of biological role, ubiquitin-protein hydrolase involved both in the processing of ubiquitin precursors and of ubiquitinated proteins. This enzyme is a thiol protease that recognizes and hydrolyzes a peptide bond at the C-terminal glycine of ubiquitin. Also binds to free monoubiquitin and may prevent its degradation in lysosomes. The homodimer may have ATP-independent ubiquitin ligase activity. In Sus scrofa (Pig), this protein is Ubiquitin carboxyl-terminal hydrolase isozyme L1 (UCHL1).